The following is a 452-amino-acid chain: Ribosomal protein uS12 methylthiotransferase RimO (452 aa).

The region spanning 3–118 (GKIGFVSLGC…VMQAIHLHLP (116 aa)) is the MTTase N-terminal domain. Residues cysteine 12, cysteine 48, cysteine 77, cysteine 149, cysteine 153, and cysteine 156 each coordinate [4Fe-4S] cluster. Residues 135–381 (LTPKHYAYLK…MAKAEDISIK (247 aa)) enclose the Radical SAM core domain. One can recognise a TRAM domain in the interval 384 to 452 (AKKIGKRVQV…SQGHDLIAET (69 aa)).

The protein belongs to the methylthiotransferase family. RimO subfamily. [4Fe-4S] cluster serves as cofactor.

Its subcellular location is the cytoplasm. It catalyses the reaction L-aspartate(89)-[ribosomal protein uS12]-hydrogen + (sulfur carrier)-SH + AH2 + 2 S-adenosyl-L-methionine = 3-methylsulfanyl-L-aspartate(89)-[ribosomal protein uS12]-hydrogen + (sulfur carrier)-H + 5'-deoxyadenosine + L-methionine + A + S-adenosyl-L-homocysteine + 2 H(+). In terms of biological role, catalyzes the methylthiolation of an aspartic acid residue of ribosomal protein uS12. The sequence is that of Ribosomal protein uS12 methylthiotransferase RimO from Polynucleobacter asymbioticus (strain DSM 18221 / CIP 109841 / QLW-P1DMWA-1) (Polynucleobacter necessarius subsp. asymbioticus).